Consider the following 364-residue polypeptide: tRNA-specific 2-thiouridylase MnmA (364 aa).

ATP contacts are provided by residues 6 to 13 and Leu-32; that span reads AMSGGVDS. Cys-101 serves as the catalytic Nucleophile. Residues Cys-101 and Cys-193 are joined by a disulfide bond. Gly-125 lines the ATP pocket. The interval 143–145 is interaction with tRNA; it reads KDQ. The active-site Cysteine persulfide intermediate is Cys-193.

The protein belongs to the MnmA/TRMU family.

The protein localises to the cytoplasm. The catalysed reaction is S-sulfanyl-L-cysteinyl-[protein] + uridine(34) in tRNA + AH2 + ATP = 2-thiouridine(34) in tRNA + L-cysteinyl-[protein] + A + AMP + diphosphate + H(+). Functionally, catalyzes the 2-thiolation of uridine at the wobble position (U34) of tRNA, leading to the formation of s(2)U34. The polypeptide is tRNA-specific 2-thiouridylase MnmA (Rhodococcus jostii (strain RHA1)).